Here is a 114-residue protein sequence, read N- to C-terminus: Cytochrome c oxidase subunit 7A2-like, mitochondrial (114 aa).

The N-terminal 55 residues, 1–55, are a transit peptide targeting the mitochondrion; that stretch reads MYYKFSGFTQKLAGAWASDAYSPQGLRPVVSTEAPPIIFATPTKLSSGPTAYDYA. An N6-acetyllysine modification is found at Lys69. A helical transmembrane segment spans residues 82–107; the sequence is PDQMLYRTTMALTVGGTIYCLIALYM.

The protein belongs to the cytochrome c oxidase VIIa family. As to quaternary structure, interacts with the mitochondrial respiratory complexes III (CIII) and IV (CIV), promoting their association.

It localises to the mitochondrion inner membrane. Functionally, assembly factor that mediates the formation of some mitochondrial respiratory supercomplexes (respirasomes), thereby promoting oxidative phosphorylation and energy metabolism. Acts as a molecular adapter that associates with both mitochondrial respiratory complexes III (CIII) and IV (CIV), promoting their association. Mediates the formation of various mitochondrial respiratory supercomplexes, such as MCIII(2)IV(2), composed of two CIII and two CIV, and the CS-respirasome (MCI(1)III(2)IV(2)), composed of one CI, two CIII and two CIV. Not involved in the formation of the canonical respirasome (MCI(1)III(2)IV(1)), composed of one CI, two CIII and one CIV. The formation of different respirasomes is important for cell adaptation to oxygen conditions and prevent metabolic exhaustion: supercomplexes mediated by COX7A2L/SCAF1 are required to maintain oxidative phosphorylation upon low oxygen conditions and promote metabolic rewiring toward glycolysis. The chain is Cytochrome c oxidase subunit 7A2-like, mitochondrial from Bos taurus (Bovine).